The chain runs to 277 residues: Nickel transport system permease protein NikC (277 aa).

Residues 1–12 (MNFFLSSRWSVR) are Cytoplasmic-facing. Residues 13-33 (LALIIIALLALIALTSQWWLP) form a helical membrane-spanning segment. Residues 34-78 (YDPQAIDLPSRLLSPDAQHWLGTDHLGRDIFSRLMAATRVSLGSV) are Periplasmic-facing. The region spanning 67-260 (LMAATRVSLG…ISVMAFNLVG (194 aa)) is the ABC transmembrane type-1 domain. Residues 79–99 (MACLLLVLTLGLVIGGSAGLI) form a helical membrane-spanning segment. The Cytoplasmic portion of the chain corresponds to 100-120 (GGRVDQATMRVADMFMTFPTS). Residues 121–141 (ILSFFMVGVLGTGLTNVIIAI) form a helical membrane-spanning segment. Topologically, residues 142–183 (ALSHWAWYARMVRSLVISLRQREFVLASRLSGAGHVRVFVDH) are periplasmic. The chain crosses the membrane as a helical span at residues 184-204 (LAGAVIPSLLVLATLDIGHMM). The Cytoplasmic portion of the chain corresponds to 205-207 (LHV). A helical membrane pass occupies residues 208 to 228 (AGMSFLGLGVTAPTAEWGVMI). The Periplasmic segment spans residues 229–239 (NDARQYIWTQP). Residues 240-260 (LQMFWPGLALFISVMAFNLVG) traverse the membrane as a helical segment. At 261 to 277 (DALRDHLDPHLVTEHAH) the chain is on the cytoplasmic side.

It belongs to the binding-protein-dependent transport system permease family. OppBC subfamily. In terms of assembly, probably forms a heterodimeric pore with NikB.

The protein localises to the cell inner membrane. In terms of biological role, involved in a nickel transport system, probably translocates nickel through the bacterial inner membrane. This Escherichia coli O157:H7 protein is Nickel transport system permease protein NikC (nikC).